The following is an 82-amino-acid chain: P2Y purinoceptor 2 (82 aa).

A helical transmembrane segment spans residues 1 to 25 (LPLSYGVVCVLGLCLNVVALYIFLC). Topologically, residues 26–35 (RLKTWNASTT) are cytoplasmic. The chain crosses the membrane as a helical span at residues 36 to 56 (YMFHLAVSDSLYAASLPLLVY). Residues 57–75 (YYAQGDHWPFSTVLCKLVR) lie on the Extracellular side of the membrane. A helical transmembrane segment spans residues 76–82 (FLFYTNL).

The protein belongs to the G-protein coupled receptor 1 family. Expressed in brain, heart, stria vascularis and vestibular labyrinth.

It is found in the cell membrane. In terms of biological role, receptor for ATP and UTP coupled to G-proteins that activate a phosphatidylinositol-calcium second messenger system. Not activated by UDP. The polypeptide is P2Y purinoceptor 2 (P2RY2) (Meriones unguiculatus (Mongolian jird)).